Reading from the N-terminus, the 1072-residue chain is MLGDEKEGTSTIPGLNQIQFEGFYRFIDQGLIEELSKFPKIEDIDHEIEFQLFVETYQLVEPLIKERDAVYESLTYSSELYVSAGLIWKTSRNMQEQRIFIGNIPLMNSLGTSIVNGIYRIVINQILQSPGIYYQSELDHNGISVYTGTIISDWGGRLELEIDKKARIWARVSRKQKISILVLSSAMGLNLREILENVCYPEIFLSFLTDKEKKKIGSKENAILEFYQQFSCVGGDPIFSESLCKELQKKFFHQRCELGRIGRRNINWRLNLNIPQNNIFLLPRDILAAADHLIGMKFGMGTLDDMNHLKNKRIRSVADLLQDQLGLALARLENVVKGTISGAIRHKLIPTPQNLVTSTPLTTTYESFFGLHPLSQVLDRTNPLTQIVHGRKLSYLGPGGLTGRTANFRIRDIHPSHYGRICPIDTSEGINVGLIGSLSIHARIGDWGSLESPFYELFEKSKKARIRMLFLSPSQDEYYMIAAGNSLALNRGIQEEQAVPARYRQEFLTIAWEEVHLRSIFPFQYFSIGASLIPFIEHNDANRALMSSNMQRQAVPLSRSEKCIVGTGLERQVALDSGVPAIAEHEGKILYTDTEKIVFSGNGDTLSIPLIMYQRSNKNTCMHQKPQVRRGKCIKKGQILADGAATVGGELALGKNILVAYMPWEGYNFEDAVLISECLVYGDIYTSFHIRKYEIQTHVTTQGPERITKEIPHLEGRLLRNLDKNGIVMLGSWVETGDILVGKLTPQVAKESSYAPEDRLLRAILGIQVSTSKETCLKLPIGGRGRVIDVRWVQKKGGSSYNPEIIRVYISQKREIKVGDKVAGRHGNKGIISKILPRQDMPYLQDGRPVDMVFNPLGVPSRMNVGQIFECSLGLAGSLLDRHYRIAPFDERYEQEASRKLVFSELYEASKQTANPWVFEPEYPGKSRIFDGRTGDPFEQPVIIGKPYILKLIHQVDDKIHGRSSGHYALVTQQPLRGRSKQGGQRVGEMEVWALEGFGVAHILQEMLTYKSDHIRARQEVLGTTIIGGTIPKPEDAPESFRLLVRELRSLALELNHFLVSEKNFQINRKEV.

It belongs to the RNA polymerase beta chain family. In plastids the minimal PEP RNA polymerase catalytic core is composed of four subunits: alpha, beta, beta', and beta''. When a (nuclear-encoded) sigma factor is associated with the core the holoenzyme is formed, which can initiate transcription.

The protein localises to the plastid. It is found in the chloroplast. It carries out the reaction RNA(n) + a ribonucleoside 5'-triphosphate = RNA(n+1) + diphosphate. DNA-dependent RNA polymerase catalyzes the transcription of DNA into RNA using the four ribonucleoside triphosphates as substrates. In Capsella bursa-pastoris (Shepherd's purse), this protein is DNA-directed RNA polymerase subunit beta.